Consider the following 171-residue polypeptide: Large ribosomal subunit protein bL17 (171 aa).

Residues Lys-140 to Arg-152 show a composition bias toward basic and acidic residues. The interval Lys-140–Lys-171 is disordered. Positions Lys-156 to Glu-165 are enriched in polar residues.

This sequence belongs to the bacterial ribosomal protein bL17 family. In terms of assembly, part of the 50S ribosomal subunit. Contacts protein L32.

The polypeptide is Large ribosomal subunit protein bL17 (Leptospira interrogans serogroup Icterohaemorrhagiae serovar copenhageni (strain Fiocruz L1-130)).